A 317-amino-acid chain; its full sequence is Olfactory receptor 8B3 (317 aa).

The Extracellular portion of the chain corresponds to 1 to 32 (MISMLAGNGSSVTEFVLAGLTDRPELQLPLFY). Asn-8 carries N-linked (GlcNAc...) asparagine glycosylation. A helical membrane pass occupies residues 33–53 (LFLIIYIITVVGNLGLIILIG). Over 54-59 (LNPHLH) the chain is Cytoplasmic. Residues 60–80 (TPMYYFLFNLSFIDLCYSSVF) form a helical membrane-spanning segment. The Extracellular portion of the chain corresponds to 81–97 (SPKMLINFVSEKNSISY). A helical membrane pass occupies residues 98–118 (AGCMTQLFLFLFFVISECYML). Residues 119 to 136 (TSMAYDRYVAICNPLLYK) lie on the Cytoplasmic side of the membrane. The chain crosses the membrane as a helical span at residues 137–157 (VTMSPQICSVISFAAYGMGFA). Residues 158–199 (GSSAHTGCMLRLTFCNVNVINHYLCDILPLLQLSCTSTYVNE) lie on the Extracellular side of the membrane. Residues 200–220 (VVVLIVVGINITVPSFTILIS) form a helical membrane-spanning segment. Over 221-242 (YVFILANILNIKSTQGRAKAFS) the chain is Cytoplasmic. A helical transmembrane segment spans residues 243-263 (TCSSHIMAISLFFGSAAFMYL). At 264–274 (KYSSGSMEQGK) the chain is on the extracellular side. Residues 275 to 294 (ISSVFYTNVGPMLNPLIYSL) form a helical membrane-spanning segment. Topologically, residues 295-317 (RNKDVKVALRKSLIKFREKTDFN) are cytoplasmic.

This sequence belongs to the G-protein coupled receptor 1 family.

The protein resides in the cell membrane. In terms of biological role, odorant receptor. The chain is Olfactory receptor 8B3 from Mus musculus (Mouse).